The primary structure comprises 397 residues: Growth-regulating factor 5 (397 aa).

The QLQ domain occupies 16 to 51 (PFTPTQWEELEHQALIYKYMVSGVPVPPELIFSIRR). Short sequence motifs (bipartite nuclear localization signal) lie at residues 78–96 (RKPDPEPGRCRRTDGKKWR) and 114–121 (RGRNRARK). A WRC domain is found at 81-125 (DPEPGRCRRTDGKKWRCSREAYPDSKYCEKHMHRGRNRARKSLDQ). Disordered stretches follow at residues 108-172 (CEKH…SMDA), 197-217 (LDYPYPSTSPKQQQQTLHHAS), 288-320 (PYHHCSTDHNKIDHHHTYSSSSSSQHLHHDHDH), and 340-397 (VLAN…DTGS). Over residues 111-120 (HMHRGRNRAR) the composition is skewed to basic residues. Residues 128–172 (TTTTPLTSPSLSFTNNNNPSPTLSSSSSSNSSSTTYSASSSSMDA) are compositionally biased toward low complexity. The segment covering 288-298 (PYHHCSTDHNK) has biased composition (basic and acidic residues).

Belongs to the GRF family. In terms of assembly, interacts with GIF1. As to expression, strongly expressed in actively growing and developing tissues, such as roots, upper stems, and shoot tips containing the shoot apical meristem (SAM) and flower buds. Also expressed in mature flowers, but weakly expressed in mature stems and leaves.

Its subcellular location is the nucleus. Functionally, transcription activator that plays a role in the regulation of cell expansion in leaf and cotyledons tissues. Acts together with GIF1 for the development of appropriate leaf size and shape through the promotion and/or maintenance of cell proliferation activity in leaf primordia. This is Growth-regulating factor 5 (GRF5) from Arabidopsis thaliana (Mouse-ear cress).